A 418-amino-acid polypeptide reads, in one-letter code: Probable carboxypeptidase AO090166000075 (418 aa).

The signal sequence occupies residues 1–18 (MKATDLFHVTALVAGALA). Residue Asn-74 is glycosylated (N-linked (GlcNAc...) asparagine). Position 147 (Asp-147) interacts with Zn(2+). Asn-168 carries an N-linked (GlcNAc...) asparagine glycan. Catalysis depends on Glu-179, which acts as the Proton acceptor. Position 180 (Glu-180) interacts with Zn(2+).

This sequence belongs to the peptidase M20A family. Zn(2+) is required as a cofactor.

It localises to the secreted. The chain is Probable carboxypeptidase AO090166000075 from Aspergillus oryzae (strain ATCC 42149 / RIB 40) (Yellow koji mold).